Consider the following 287-residue polypeptide: Elongation factor Ts (287 aa).

Positions 79–82 (TDFV) are involved in Mg(2+) ion dislocation from EF-Tu.

This sequence belongs to the EF-Ts family.

The protein resides in the cytoplasm. Its function is as follows. Associates with the EF-Tu.GDP complex and induces the exchange of GDP to GTP. It remains bound to the aminoacyl-tRNA.EF-Tu.GTP complex up to the GTP hydrolysis stage on the ribosome. The sequence is that of Elongation factor Ts from Anaplasma phagocytophilum (strain HZ).